A 341-amino-acid chain; its full sequence is 4-amino-5-hydroxymethyl-2-methylpyrimidine phosphate synthase (341 aa).

At lysine 62 the chain carries N6-(pyridoxal phosphate)lysine. Histidine 66 is a catalytic residue. 115 to 118 (GEFG) is a binding site for pyridoxal 5'-phosphate. The CCCFC; essential for catalytic activity, may be the site of iron coordination signature appears at 195-199 (CCCFC).

This sequence belongs to the NMT1/THI5 family. In terms of assembly, homodimer. Requires Fe cation as cofactor.

It catalyses the reaction N(6)-(pyridoxal phosphate)-L-lysyl-[4-amino-5-hydroxymethyl-2-methylpyrimidine phosphate synthase] + L-histidyl-[4-amino-5-hydroxymethyl-2-methylpyrimidine phosphate synthase] + 2 Fe(3+) + 4 H2O = L-lysyl-[4-amino-5-hydroxymethyl-2-methylpyrimidine phosphate synthase] + (2S)-2-amino-5-hydroxy-4-oxopentanoyl-[4-amino-5-hydroxymethyl-2-methylpyrimidine phosphate synthase] + 4-amino-2-methyl-5-(phosphooxymethyl)pyrimidine + 3-oxopropanoate + 2 Fe(2+) + 2 H(+). It functions in the pathway cofactor biosynthesis; thiamine diphosphate biosynthesis. Its function is as follows. Responsible for the formation of the pyrimidine heterocycle in the thiamine biosynthesis pathway. Catalyzes the formation of hydroxymethylpyrimidine phosphate (HMP-P) from histidine and pyridoxal phosphate (PLP). The protein uses PLP and the active site histidine to form HMP-P, generating an inactive enzyme. The enzyme can only undergo a single turnover, which suggests it is a suicide enzyme. This Uromyces fabae (Rust fungus) protein is 4-amino-5-hydroxymethyl-2-methylpyrimidine phosphate synthase.